A 360-amino-acid chain; its full sequence is MRPAQALIDLDALRHNYRLARQLGGGKALAVVKADAYGHGAVRCAQALEPEADGFAVACIEEALELRQAGVRAPILLLEGFFEHDELALIAEHDLWTVVATPWQVRALAEFRSPRPLRVWLKLDSGMHRLGLSPEDFRAAWLHLRGLPQIDSLVLMTHLAQADELECSRTDEQAVAFALTCGGMRAETSLRNSPGLLGWPALRNDWSRPGLMLYGANPFPQPSELTAQLRPVMTVRSRIISVRDLPAGEPVGYGARFVAERPTRVGVVAMGYADGYPQFAPNGTPVLVDGKVCPLIGRVSMDMLTVDLTEHPHADVGTPVQLWGDAPQVSTLAAQCNVSAYQLLCGLKRVPRHYSTPAHA.

The Proton acceptor; specific for D-alanine role is filled by K33. An N6-(pyridoxal phosphate)lysine modification is found at K33. R129 is a binding site for substrate. Y253 (proton acceptor; specific for L-alanine) is an active-site residue. M301 provides a ligand contact to substrate.

It belongs to the alanine racemase family. Requires pyridoxal 5'-phosphate as cofactor.

It carries out the reaction L-alanine = D-alanine. It functions in the pathway amino-acid biosynthesis; D-alanine biosynthesis; D-alanine from L-alanine: step 1/1. Functionally, catalyzes the interconversion of L-alanine and D-alanine. May also act on other amino acids. The sequence is that of Alanine racemase (alr) from Xanthomonas campestris pv. campestris (strain 8004).